The following is a 186-amino-acid chain: uncharacterized protein (186 aa).

The signal sequence occupies residues 1–21; it reads MKFFLGSALFLILTFINLVRA. Residues 22–142 are Extracellular-facing; that stretch reads EFEFITPAED…AFSVNPIDKK (121 aa). Residues asparagine 62, asparagine 75, asparagine 93, and asparagine 104 are each glycosylated (N-linked (GlcNAc...) asparagine). A helical membrane pass occupies residues 143-163; the sequence is LAIGLSVGLSCCILIVLFLHF. Residues 164–186 are Cytoplasmic-facing; it reads ATRRERRILKNEKELEMSSYRKH.

The protein resides in the membrane. This is an uncharacterized protein from Schizosaccharomyces pombe (strain 972 / ATCC 24843) (Fission yeast).